The primary structure comprises 286 residues: Beta-lactamase SHV-5 (286 aa).

Positions 1–21 are cleaved as a signal peptide; the sequence is MRYIRLCIISLLATLPLAVHA. Ser-66 functions as the Acyl-ester intermediate in the catalytic mechanism. A disulfide bridge links Cys-73 with Cys-119. Glu-164 functions as the Proton acceptor in the catalytic mechanism. Residue 230–232 participates in substrate binding; it reads KTG.

The protein belongs to the class-A beta-lactamase family.

The catalysed reaction is a beta-lactam + H2O = a substituted beta-amino acid. In terms of biological role, SHV enzymes hydrolyze broad spectrum cephalosporins notably cefotaxime and ceftazidime. SHV-5 causes particularly high levels of resistance to aztreonam and ceftazidime. This Klebsiella pneumoniae protein is Beta-lactamase SHV-5 (bla).